Consider the following 221-residue polypeptide: Factor arrest protein 7 (221 aa).

As to quaternary structure, component of a complex at least composed of FAR3, FAR7, FAR8, FAR10, FAR11 and VPS64.

In terms of biological role, participates in the control of the reentry into the cell cycle following pheromone treatment. The chain is Factor arrest protein 7 (FAR7) from Saccharomyces cerevisiae (strain ATCC 204508 / S288c) (Baker's yeast).